The sequence spans 249 residues: MTRYKATISYDGYAFAGFQRQSHARSVQEEIEKTLTRLNKGQTITVHGAGRTDSGVHALGQVIHFDLPYQMDEEKLRFALDTQSPEDIDVISIELVADDFHCRYAKHSKTYEFIVDRGRPKNPMRRHYATHFPYPLDVERMQIAIKKLEGTHDFTGFTASGTSVEDKVRTITEASLIVDETGQFLTFTFSGNGFLYKQIRNMVGTLLKIGNNRMPVEQIDLILEKKDRQLAGPTAAPNGLYLKEIRYEE.

D53 acts as the Nucleophile in catalysis. Y111 contacts substrate.

It belongs to the tRNA pseudouridine synthase TruA family. As to quaternary structure, homodimer.

The enzyme catalyses uridine(38/39/40) in tRNA = pseudouridine(38/39/40) in tRNA. Formation of pseudouridine at positions 38, 39 and 40 in the anticodon stem and loop of transfer RNAs. The sequence is that of tRNA pseudouridine synthase A from Streptococcus pneumoniae serotype 2 (strain D39 / NCTC 7466).